Consider the following 223-residue polypeptide: Cytidylate kinase (223 aa).

12-20 (GPSGVGKGT) provides a ligand contact to ATP.

This sequence belongs to the cytidylate kinase family. Type 1 subfamily.

The protein localises to the cytoplasm. The catalysed reaction is CMP + ATP = CDP + ADP. The enzyme catalyses dCMP + ATP = dCDP + ADP. This Xylella fastidiosa (strain M23) protein is Cytidylate kinase.